A 476-amino-acid chain; its full sequence is Adenosylhomocysteinase (476 aa).

T67, D142, and E202 together coordinate substrate. NAD(+) is bound at residue 203-205 (TTT). Residues K232 and D236 each coordinate substrate. NAD(+) is bound by residues N237, 266–271 (GYGDVG), E289, N324, 345–347 (IGH), and N390.

This sequence belongs to the adenosylhomocysteinase family. It depends on NAD(+) as a cofactor.

The protein localises to the cytoplasm. It catalyses the reaction S-adenosyl-L-homocysteine + H2O = L-homocysteine + adenosine. Its pathway is amino-acid biosynthesis; L-homocysteine biosynthesis; L-homocysteine from S-adenosyl-L-homocysteine: step 1/1. In terms of biological role, may play a key role in the regulation of the intracellular concentration of adenosylhomocysteine. This is Adenosylhomocysteinase from Parasynechococcus marenigrum (strain WH8102).